The chain runs to 95 residues: Aspartyl/glutamyl-tRNA(Asn/Gln) amidotransferase subunit C (95 aa).

It belongs to the GatC family. In terms of assembly, heterotrimer of A, B and C subunits.

It catalyses the reaction L-glutamyl-tRNA(Gln) + L-glutamine + ATP + H2O = L-glutaminyl-tRNA(Gln) + L-glutamate + ADP + phosphate + H(+). The catalysed reaction is L-aspartyl-tRNA(Asn) + L-glutamine + ATP + H2O = L-asparaginyl-tRNA(Asn) + L-glutamate + ADP + phosphate + 2 H(+). Allows the formation of correctly charged Asn-tRNA(Asn) or Gln-tRNA(Gln) through the transamidation of misacylated Asp-tRNA(Asn) or Glu-tRNA(Gln) in organisms which lack either or both of asparaginyl-tRNA or glutaminyl-tRNA synthetases. The reaction takes place in the presence of glutamine and ATP through an activated phospho-Asp-tRNA(Asn) or phospho-Glu-tRNA(Gln). The protein is Aspartyl/glutamyl-tRNA(Asn/Gln) amidotransferase subunit C of Bartonella bacilliformis (strain ATCC 35685 / KC583 / Herrer 020/F12,63).